A 371-amino-acid polypeptide reads, in one-letter code: Anhydro-N-acetylmuramic acid kinase (371 aa).

12 to 20 provides a ligand contact to ATP; that stretch reads GTVLDGNID.

The protein belongs to the anhydro-N-acetylmuramic acid kinase family.

The catalysed reaction is 1,6-anhydro-N-acetyl-beta-muramate + ATP + H2O = N-acetyl-D-muramate 6-phosphate + ADP + H(+). The protein operates within amino-sugar metabolism; 1,6-anhydro-N-acetylmuramate degradation. Its pathway is cell wall biogenesis; peptidoglycan recycling. Its function is as follows. Catalyzes the specific phosphorylation of 1,6-anhydro-N-acetylmuramic acid (anhMurNAc) with the simultaneous cleavage of the 1,6-anhydro ring, generating MurNAc-6-P. Is required for the utilization of anhMurNAc either imported from the medium or derived from its own cell wall murein, and thus plays a role in cell wall recycling. The protein is Anhydro-N-acetylmuramic acid kinase of Brucella anthropi (strain ATCC 49188 / DSM 6882 / CCUG 24695 / JCM 21032 / LMG 3331 / NBRC 15819 / NCTC 12168 / Alc 37) (Ochrobactrum anthropi).